Reading from the N-terminus, the 312-residue chain is Telomere-binding protein OPG077 (312 aa).

This sequence belongs to the orthopoxvirus OPG077 family.

The protein resides in the virion. DNA-binding protein which binds to the hairpin form of the viral telomeric sequence. Required for the production of mature virions (MV). In Rabbitpox virus (strain Utrecht) (RPV), this protein is Telomere-binding protein OPG077 (OPG077).